Reading from the N-terminus, the 3323-residue chain is Mucin-3A (3323 aa).

Positions 1 to 15 (MQLLGLLGLLWMLKA) are cleaved as a signal peptide. Disordered regions lie at residues 218–243 (TISS…TSPT), 270–289 (TSMT…SSPT), 325–345 (ISRS…STVT), 359–380 (GTLS…TETA), 539–677 (MSAS…PSTE), 700–722 (NASS…GTNS), 734–756 (ETSS…KTAK), 909–991 (SFSS…TLTP), 1170–1201 (ISSA…TTPT), 1318–1356 (AESA…FPSS), 1380–1442 (AMTS…TNPV), 1484–1509 (TMTE…ETAK), 1714–1746 (TPSS…TPTS), 1793–1844 (FTSS…YPTS), and 1900–2056 (TSHS…SHST). Positions 270–284 (TSMTTTASQPTATNT) are enriched in low complexity. The segment covering 545-563 (GTTHTESISSPPASTSTLH) has biased composition (polar residues). Positions 564-618 (TTAESTLAPTTTTSFTTSTTMEPPSTTAATTGTGQTTFTSSTATFPETTTPTPTT) are enriched in low complexity. Residues 619–629 (DMSTESLTTAM) are compositionally biased toward polar residues. Over residues 630–676 (TSPPITSSVTSTNTVTSMTTTTSPPTTTNSFTSLTSMPLSSTPVPST) the composition is skewed to low complexity. Residues 700–721 (NASSMTTSETTYPNSPTGPGTN) show a composition bias toward polar residues. A compositionally biased stretch (low complexity) spans 909-918 (SFSSSMSESS). Polar residues predominate over residues 919-932 (AGTTHTESISSPRG). Low complexity predominate over residues 933-991 (TTSTLHTTVESTPSPTTTTSFTTSTMMEPPSSTVSTTGRGQTTFPSSTATFPETTTLTP). The segment covering 1324-1356 (PTTTTSFTTSPTMEPPSTTVATTGTGQTTFPSS) has biased composition (low complexity). 32 consecutive repeat copies span residues 1893 to 1910 (VTTT…FTSS), 1911 to 1927 (IATT…FTSS), 1928 to 1944 (ITTT…FTSS), 1945 to 1961 (ITNT…FTSS), 1962 to 1978 (ITTT…LTSS), 1979 to 1995 (ITTT…YTSL), 1996 to 2012 (ITTT…FTSS), 2013 to 2029 (ITTT…LTSS), 2030 to 2046 (ITTT…FTSS), 2047 to 2062 (ITTE…FTSL), 2063 to 2079 (ITIT…YTTS), 2080 to 2096 (ITTT…FTSS), 2097 to 2113 (ITTT…FTSS), 2114 to 2130 (ITTS…FTSS), 2131 to 2147 (ITTT…FTSS), 2148 to 2164 (ITTT…FTSL), 2165 to 2191 (ITTT…FTSS), 2192 to 2208 (NTIT…YITS), 2209 to 2225 (ITTT…FSSS), 2226 to 2242 (ITTT…FTSS), 2243 to 2259 (ITTT…FTSS), 2260 to 2276 (ITTT…FTSS), 2277 to 2293 (ITTS…STSL), 2294 to 2310 (ITTT…FTSS), 2311 to 2327 (ITTT…FTSS), 2328 to 2344 (ITTT…FTSS), 2345 to 2361 (ITTT…FTSS), 2362 to 2378 (ITTT…FSSS), 2379 to 2395 (ITTT…LTSW), 2396 to 2412 (VTTT…LTSS), 2413 to 2429 (ITTT…FTSS), and 2430 to 2446 (ITTT…LSSS). Residues 1893 to 2446 (VTTTTKITSH…SESTPSLSSS (554 aa)) form a 32 X approximate tandem repeats, Ser/Thr-rich region. Over residues 1907–1947 (FTSSIATTETPSHSTPRFTSSITTTETPSHSTPRFTSSITN) the composition is skewed to polar residues. The span at 1948 to 2056 (TKTTSHSSPS…ITTETTSHST (109 aa)) shows a compositional bias: low complexity. Composition is skewed to low complexity over residues 2100–2170 (TETT…TTET), 2177–2384 (TTET…TTET), 2393–2447 (TSWV…SSST), and 2464–2507 (TTSE…TTTT). Disordered stretches follow at residues 2100-2447 (TETT…SSST), 2464-2508 (TTSE…TTTD), 2578-2608 (TQTP…DSST), 2631-2656 (IPST…TSTS), 2834-2858 (MMPE…VPTN), and 2897-2937 (SSLP…TSRR). A compositionally biased stretch (polar residues) spans 2578–2602 (TQTPPVLTSATGTQTSPAPTTVTFG). Low complexity-rich tracts occupy residues 2633 to 2656 (STHS…TSTS), 2834 to 2849 (MMPE…ASSS), and 2905 to 2937 (TSSK…TSRR). The region spanning 2976–3009 (SGDRCQLQTRCQNGGQWDGLKCQCPSTFYGSSCE) is the EGF-like domain. 2 disulfide bridges follow: cysteine 2980–cysteine 2986 and cysteine 2999–cysteine 3008. An SEA domain is found at 3018-3143 (DVVETEVGME…DSIKVNNNSK (126 aa)). Residues 3227–3247 (LVGGLTAGAALLVLLLLALGV) form a helical membrane-spanning segment.

Post-translationally, highly O-glycosylated and probably also N-glycosylated. In terms of tissue distribution, broad specificity; small intestine, colon, colonic tumors, heart, liver, thymus, prostate, pancreas and gall bladder.

It is found in the membrane. Its subcellular location is the secreted. Functionally, major glycoprotein component of a variety of mucus gels. Thought to provide a protective, lubricating barrier against particles and infectious agents at mucosal surfaces. May be involved in ligand binding and intracellular signaling. The protein is Mucin-3A of Homo sapiens (Human).